The following is a 207-amino-acid chain: Coiled-coil domain-containing protein 25 (207 aa).

Residues 1–104 (MVFYFTSAVV…SNLKKTADMD (104 aa)) are Extracellular-facing. The tract at residues 20-24 (KDKYE) is DNA-binding. A helical transmembrane segment spans residues 105–121 (IGQIGFHRQKEVKIVAV). A coiled-coil region spans residues 112–189 (RQKEVKIVAV…EDLKNYTSLM (78 aa)). Over 122–207 (EKKINEIVNR…EDGYDSDDFM (86 aa)) the chain is Cytoplasmic. Over residues 140–183 (YPDLAAEKESRDREERNEKKAQIQEQKKKEKEEVKKKKEMEDLK) the composition is skewed to basic and acidic residues. The segment at 140 to 207 (YPDLAAEKES…EDGYDSDDFM (68 aa)) is disordered. Positions 184 to 198 (NYTSLMKSDNMTTNE) are enriched in polar residues. Ser-203 carries the phosphoserine modification.

The protein belongs to the CCDC25 family. In terms of assembly, interacts (via cytoplasmic region) with ILK.

It localises to the cell membrane. Its subcellular location is the endomembrane system. Functionally, transmembrane receptor that senses neutrophil extracellular traps (NETs) and triggers the ILK-PARVB pathway to enhance cell motility. NETs are mainly composed of DNA fibers and are released by neutrophils to bind pathogens during inflammation. Specifically binds NETs on its extracellular region, in particular the 8-OHdG-enriched DNA present in NETs, and recruits ILK, initiating the ILK-PARVB cascade to induce cytoskeleton rearrangement and directional migration of cells. This Danio rerio (Zebrafish) protein is Coiled-coil domain-containing protein 25.